The primary structure comprises 99 residues: Putative membrane protein insertion efficiency factor (99 aa).

Belongs to the UPF0161 family.

It is found in the cell inner membrane. In terms of biological role, could be involved in insertion of integral membrane proteins into the membrane. This chain is Putative membrane protein insertion efficiency factor, found in Salinibacter ruber (strain DSM 13855 / M31).